Consider the following 308-residue polypeptide: Acetylglutamate kinase (308 aa).

Residues 73-74 (GG), Arg-95, and Asn-194 contribute to the substrate site.

The protein belongs to the acetylglutamate kinase family. ArgB subfamily.

The protein localises to the cytoplasm. The enzyme catalyses N-acetyl-L-glutamate + ATP = N-acetyl-L-glutamyl 5-phosphate + ADP. The protein operates within amino-acid biosynthesis; L-arginine biosynthesis; N(2)-acetyl-L-ornithine from L-glutamate: step 2/4. Its function is as follows. Catalyzes the ATP-dependent phosphorylation of N-acetyl-L-glutamate. In Rhodococcus jostii (strain RHA1), this protein is Acetylglutamate kinase.